A 386-amino-acid polypeptide reads, in one-letter code: Cystathionine gamma-synthase (386 aa).

The residue at position 198 (K198) is an N6-(pyridoxal phosphate)lysine.

The protein belongs to the trans-sulfuration enzymes family. As to quaternary structure, homotetramer. Pyridoxal 5'-phosphate is required as a cofactor.

It localises to the cytoplasm. The enzyme catalyses O-succinyl-L-homoserine + L-cysteine = L,L-cystathionine + succinate + H(+). It functions in the pathway amino-acid biosynthesis; L-methionine biosynthesis via de novo pathway; L-cystathionine from O-succinyl-L-homoserine: step 1/1. Functionally, catalyzes the formation of L-cystathionine from O-succinyl-L-homoserine (OSHS) and L-cysteine, via a gamma-replacement reaction. In the absence of thiol, catalyzes gamma-elimination to form 2-oxobutanoate, succinate and ammonia. In Escherichia coli (strain K12), this protein is Cystathionine gamma-synthase (metB).